Here is a 295-residue protein sequence, read N- to C-terminus: Sperm acrosome membrane-associated protein 1 (295 aa).

A signal peptide spans 1-29 (MSPGGAGCSAGLLLTVGWLLLAGLQSTCG). At 30–220 (INVTAVQDPS…SRPDTDAVLV (191 aa)) the chain is on the extracellular side. The tract at residues 39–71 (SLVSEGENEGEEEAENDSEVENEPQAEAEQDVS) is disordered. Residues 44 to 68 (GENEGEEEAENDSEVENEPQAEAEQ) are compositionally biased toward acidic residues. A glycan (N-linked (GlcNAc...) asparagine) is linked at asparagine 72. A helical transmembrane segment spans residues 221 to 241 (FVLTIGVIICIFVIFVLIFII). The Cytoplasmic segment spans residues 242–295 (VNWATVKDFWASKASTTEIQSELSSMKYKDSTSLDQSPTEIPGHEDDALSEWNE). At serine 256 the chain carries Phosphoserine. Residues 263 to 295 (ELSSMKYKDSTSLDQSPTEIPGHEDDALSEWNE) form a disordered region. At tyrosine 269 the chain carries Phosphotyrosine. Phosphoserine is present on residues serine 278 and serine 291.

Interacts with CYLC1; the interaction may be relevant for proper acrosome attachment to the nuclear envelope. Post-translationally, N-glycosylated. In terms of tissue distribution, detected in spermatozoa (at protein level).

The protein resides in the cytoplasmic vesicle. The protein localises to the secretory vesicle. Its subcellular location is the acrosome inner membrane. Functionally, plays a role in acrosome expansion and establishment of normal sperm morphology during spermatogenesis. Important for male fertility. The chain is Sperm acrosome membrane-associated protein 1 from Sus scrofa (Pig).